We begin with the raw amino-acid sequence, 1135 residues long: LRR receptor-like serine/threonine-protein kinase RGI2 (1135 aa).

Positions 1–35 are cleaved as a signal peptide; it reads MSLQMPIPRKKALTVSHFSITLSLFLAFFISSTSA. Topologically, residues 36 to 723 are extracellular; that stretch reads STNEVSALIS…QRGVHSHRLR (688 aa). The cysteines at positions 69 and 76 are disulfide-linked. Asparagine 101 and asparagine 117 each carry an N-linked (GlcNAc...) asparagine glycan. 4 LRR repeats span residues 105 to 129, 130 to 153, 154 to 177, and 179 to 203; these read FTSL…IGDC, SELI…LGKL, KNLQ…LGDC, and SLKN…KIST. 4 consecutive short sequence motifs (small peptide recognition) follow at residues 186 to 187, 208 to 211, 231 to 236, and tyrosine 259; these read FD, RAGG, and VLGLAA. LRR repeat units lie at residues 226 to 250, 251 to 274, 276 to 298, 299 to 323, 325 to 345, 346 to 370, 372 to 395, 397 to 418, 419 to 442, 444 to 466, 467 to 490, 491 to 514, 516 to 538, 539 to 562, 564 to 586, 587 to 610, 612 to 634, 635 to 658, and 659 to 683; these read CRNL…LGQL, SKLQ…LGNC, ELIN…LGKL, QNLE…GFMK, LNAI…SFGN, LSNL…LSNC, KLVQ…GLLK, LNIF…LAGC, QNLQ…LFQL, NLTK…IGNC, TSLV…IGFL, QNLS…ISNC, QLQM…LSSL, TKLQ…LGHL, SLNR…LGHC, TNLQ…LFDI, DLDI…RISA, LNRL…LSGL, and ENLV…VFRQ. Asparagine 273 carries an N-linked (GlcNAc...) asparagine glycan. The Small peptide recognition signature appears at 281–283; sequence FLY. The Small peptide recognition motif lies at 329 to 332; that stretch reads DLSM. Asparagine 345 is a glycosylation site (N-linked (GlcNAc...) asparagine). Positions 351 to 353 match the Small peptide recognition motif; sequence ELM. Asparagine 358 and asparagine 369 each carry an N-linked (GlcNAc...) asparagine glycan. 2 consecutive short sequence motifs (small peptide recognition) follow at residues 399 to 403 and 425 to 428; these read IFLGW and DLSQ. Residue asparagine 444 is glycosylated (N-linked (GlcNAc...) asparagine). The Small peptide recognition motif lies at 447-451; sequence KLLLI. Residue asparagine 465 is glycosylated (N-linked (GlcNAc...) asparagine). The Small peptide recognition motif lies at 471–473; sequence RLR. N-linked (GlcNAc...) asparagine glycans are attached at residues asparagine 492, asparagine 502, asparagine 521, and asparagine 524. 2 N-linked (GlcNAc...) asparagine glycosylation sites follow: asparagine 598 and asparagine 618. N-linked (GlcNAc...) asparagine glycosylation is found at asparagine 665 and asparagine 707. A helical transmembrane segment spans residues 724-744; it reads IAIGLLISVTAVLAVLGVLAV. The Cytoplasmic portion of the chain corresponds to 745–1135; that stretch reads IRAKQMIRDD…ATSNVRPNLK (391 aa). At threonine 777 the chain carries Phosphothreonine. The region spanning 785–1066 is the Protein kinase domain; sequence LVEGNVIGKG…KDVAAMLSEI (282 aa). ATP-binding positions include 791-799 and lysine 813; that span reads IGKGCSGIV. A phosphotyrosine mark is found at tyrosine 868 and tyrosine 907. The active-site Proton acceptor is the aspartate 920. Phosphotyrosine occurs at positions 963 and 970. A disordered region spans residues 1077 to 1135; sequence DGCSGSCNNGRERGKDDSTSSVMQQTAKYLRSSSTSFSASSLLYSSSSSATSNVRPNLK. The segment covering 1108-1128 has biased composition (low complexity); it reads SSSTSFSASSLLYSSSSSATS.

Belongs to the protein kinase superfamily. Ser/Thr protein kinase family. Binds to RGF peptides such as RGF1, GLV5/CLEL1/RGF2, GLV7/CLEL3/RGF3, GLV3/RGF4, GLV10/CLEL7/RGF5 and RGF10/CLELN; these interactions trigger the formation of heterodimers with SERK1. Interacts with UBP13. Post-translationally, phosphorylated and ubiquitinated upon interaction with RGF1, thus leading to activation a subsequent degradation. Stabilized by UBP12 and UBP13-mediated deubiquitination. In terms of processing, autophosphorylated. In terms of tissue distribution, specific to root meristems, especially in lateral root meristems (LRM).

The protein resides in the membrane. It catalyses the reaction L-seryl-[protein] + ATP = O-phospho-L-seryl-[protein] + ADP + H(+). The enzyme catalyses L-threonyl-[protein] + ATP = O-phospho-L-threonyl-[protein] + ADP + H(+). Functionally, together with RGI1, RGI3, RGI4 and RGI5, acts as a receptor of RGF peptides (e.g. RGF1, GLV5/CLEL1/RGF2, GLV7/CLEL3/RGF3, GLV3/RGF4, GLV10/CLEL7/RGF5 and RGF10/CLELN), peptide hormones which maintain the postembryonic root stem cell niche by regulating the expression levels and patterns of the transcription factor PLETHORA (PLT, e.g. PLT1 and PLT2). Links RGF peptides signal with their downstream components. The protein is LRR receptor-like serine/threonine-protein kinase RGI2 of Arabidopsis thaliana (Mouse-ear cress).